We begin with the raw amino-acid sequence, 196 residues long: Small ribosomal subunit protein uS4m (196 aa).

Residues K88–Q154 form the S4 RNA-binding domain.

The protein belongs to the universal ribosomal protein uS4 family.

Its subcellular location is the mitochondrion. This chain is Small ribosomal subunit protein uS4m (RPS4), found in Marchantia polymorpha (Common liverwort).